The chain runs to 884 residues: Lon protease homolog 2, peroxisomal (884 aa).

The Lon N-terminal domain maps to 12-255; the sequence is LAILPFRNKV…KATELVDRHL (244 aa). The disordered stretch occupies residues 67-101; the sequence is SLLSPGVGSDSGEGGSKAPGGSAGESTKQDTKNGK. The span at 75–89 shows a compositional bias: gly residues; sequence SDSGEGGSKAPGGSA. An ATP-binding site is contributed by 408–415; the sequence is GPPGVGKT. A Lon proteolytic domain is found at 689-874; the sequence is VASPGVSVGL…EEVLDHAFEG (186 aa). Active-site residues include serine 780 and lysine 823. The short motif at 882–884 is the Microbody targeting signal element; that stretch reads SKL.

The protein belongs to the peptidase S16 family.

The protein resides in the peroxisome matrix. It carries out the reaction Hydrolysis of proteins in presence of ATP.. In terms of biological role, ATP-dependent serine protease that mediates the selective degradation of misfolded and unassembled polypeptides in the peroxisomal matrix. Necessary for type 2 peroxisome targeting signal (PTS2)-containing protein processing and facilitates peroxisome matrix protein import. This is Lon protease homolog 2, peroxisomal from Oryza sativa subsp. japonica (Rice).